Reading from the N-terminus, the 422-residue chain is tRNA(Met) cytidine acetate ligase (422 aa).

Residues 7 to 20 (ITEYNPFHNGHLYH), Gly-102, Asn-172, and Arg-197 contribute to the ATP site.

The protein belongs to the TmcAL family.

The protein resides in the cytoplasm. It carries out the reaction cytidine(34) in elongator tRNA(Met) + acetate + ATP = N(4)-acetylcytidine(34) in elongator tRNA(Met) + AMP + diphosphate. Functionally, catalyzes the formation of N(4)-acetylcytidine (ac(4)C) at the wobble position of elongator tRNA(Met), using acetate and ATP as substrates. First activates an acetate ion to form acetyladenylate (Ac-AMP) and then transfers the acetyl group to tRNA to form ac(4)C34. This Halothermothrix orenii (strain H 168 / OCM 544 / DSM 9562) protein is tRNA(Met) cytidine acetate ligase.